Reading from the N-terminus, the 406-residue chain is Putative gustatory receptor 59f (406 aa).

Residues 1-36 (MRSSATKGAKLKNSPRERLSSFNPQYAERYKELYRT) lie on the Cytoplasmic side of the membrane. The chain crosses the membrane as a helical span at residues 37–57 (LFWLLLISVLANTAPITILPG). Residues 58 to 69 (CPNRFYRLVHLS) are Extracellular-facing. Residues 70-90 (WMILWYGLFVLGSYWEFVLVT) form a helical membrane-spanning segment. Residues 91 to 99 (TQRVSLDRY) are Cytoplasmic-facing. A helical membrane pass occupies residues 100–120 (LNAIESAIYVVHIFSIMLLTW). At 121-154 (QCRNWAPKLMTNIVTSDLNRAYTIDCNRTKRFIR) the chain is on the extracellular side. N-linked (GlcNAc...) asparagine glycosylation occurs at asparagine 147. A helical transmembrane segment spans residues 155–175 (LQLFLVGIFACLAIFFNIWTH). At 176–189 (KFVVYRSILSINSY) the chain is on the cytoplasmic side. The helical transmembrane segment at 190 to 210 (VMPNIISSISFAQYYLLLQGI) threads the bilayer. Residues 211-259 (AWRQRRLTEGLERELTHLHSPRISEVQKIRMHHANLIDFTKAVNRTFQY) lie on the Extracellular side of the membrane. The N-linked (GlcNAc...) asparagine glycan is linked to asparagine 254. Residues 260 to 280 (SILLLFVGCFLNFNLVLFLVY) traverse the membrane as a helical segment. Residues 281 to 364 (QGIENPSMAD…RQHVVCGVIN (84 aa)) are Cytoplasmic-facing. Residues 365–385 (LDLKFLTTLLVASADFFIFLL) traverse the membrane as a helical segment. The Extracellular segment spans residues 386–406 (QYDVTYEALSKSVQGNVTRYK). A glycan (N-linked (GlcNAc...) asparagine) is linked at asparagine 401.

This sequence belongs to the insect chemoreceptor superfamily. Gustatory receptor (GR) family. Gr10a subfamily. Expressed in the adult abdomen and wing. In larvae, is expressed in neurons of the terminal external chemosensory organ.

The protein resides in the cell membrane. Its function is as follows. Probable gustatory receptor which mediates acceptance or avoidance behavior, depending on its substrates. In Drosophila melanogaster (Fruit fly), this protein is Putative gustatory receptor 59f (Gr59f).